The sequence spans 303 residues: Elongation factor Ts (303 aa).

The interval 81-84 is involved in Mg(2+) ion dislocation from EF-Tu; it reads TDFV.

The protein belongs to the EF-Ts family.

The protein resides in the cytoplasm. Associates with the EF-Tu.GDP complex and induces the exchange of GDP to GTP. It remains bound to the aminoacyl-tRNA.EF-Tu.GTP complex up to the GTP hydrolysis stage on the ribosome. The sequence is that of Elongation factor Ts from Mesomycoplasma hyopneumoniae (strain 232) (Mycoplasma hyopneumoniae).